Reading from the N-terminus, the 647-residue chain is MANREGTDGDGSGCNGWFLVQAIVDKQTGDTVSEDEDENATDTGSDLADFIDDSTDICVQAERETAQVLLHMQEAQRDAQAVRALKRKYTDSSGDTRPYGKKVGRNTRGTLQEISLNVSSTQATQTVYSVPDSGYGNMEVETAEVEEVTVATNTNGDAEGEHGGSVREECSSVDSAIDSENQDPKSPTAQIKLLLQSNNKKAAMLTQFKETYGLSFTDLVRTFKSDKTTCTDWVAAIFGVHPTIAEGFKTLINKYALYTHIQSLDTKQGVLILMLIRYTCGKNRVTVGKGLSTLLHVPESCMLLEPPKLRSPVAALYWYRTGISNISVVTGDTPEWIQRLTVIQHGIDDSVFDLSDMVQWAFDNEYTDESDIAFNYAMLADCNSNAAAFLKSNCQAKYVKDCATMCKHYKRAQKRQMSMSQWIKFRCSKCDEGGDWRPIVQFLRYQGIEFISFLCALKEFLKGTPKKNCIVIYGPANTGKSHFCMSLMHFLQGTVISYVNSTSHFWLEPLADAKLAMLDDATGTCWSYFDNYMRNALDGYAISLDRKYKSLLQMKCPPLLITSNTNPVEDDRWPYLRSRLTVFKFPNAFPFDQNRNPVYTINDKNWKCFFEKTWCRLDLQQDEDEGDNDENTFTTFKCVTGQNTRIL.

Residues 86–88 carry the Nuclear localization signal motif; it reads KRK. Residue Ser92 is modified to Phosphoserine; by host. Residues 154–186 are disordered; sequence TNGDAEGEHGGSVREECSSVDSAIDSENQDPKS. Basic and acidic residues predominate over residues 159-170; sequence EGEHGGSVREEC. Positions 183–349 are DNA-binding region; sequence DPKSPTAQIK…LTVIQHGIDD (167 aa). The SF3 helicase domain occupies 448–598; it reads IEFISFLCAL…FPFDQNRNPV (151 aa). 474-481 contacts ATP; sequence GPANTGKS. Lys555 participates in a covalent cross-link: Glycyl lysine isopeptide (Lys-Gly) (interchain with G-Cter in SUMO).

The protein belongs to the papillomaviridae E1 protein family. Can form hexamers. Interacts with E2 protein; this interaction increases E1 DNA binding specificity. Interacts with host DNA polymerase subunit POLA2. Interacts with host single stranded DNA-binding protein RPA1. Interacts with host TOP1; this interaction stimulates the enzymatic activity of TOP1. Phosphorylated. Post-translationally, sumoylated.

The protein resides in the host nucleus. The catalysed reaction is Couples ATP hydrolysis with the unwinding of duplex DNA by translocating in the 3'-5' direction.. It catalyses the reaction ATP + H2O = ADP + phosphate + H(+). In terms of biological role, ATP-dependent DNA 3'-5' helicase required for initiation of viral DNA replication. It forms a complex with the viral E2 protein. The E1-E2 complex binds to the replication origin which contains binding sites for both proteins. During the initial step, a dimer of E1 interacts with a dimer of protein E2 leading to a complex that binds the viral origin of replication with high specificity. Then, a second dimer of E1 displaces the E2 dimer in an ATP-dependent manner to form the E1 tetramer. Following this, two E1 monomers are added to each half of the site, which results in the formation of two E1 trimers on the viral ori. Subsequently, two hexamers will be created. The double hexamer acts as a bi-directional helicase machinery and unwinds the viral DNA and then recruits the host DNA polymerase to start replication. This chain is Replication protein E1, found in Human papillomavirus 39.